We begin with the raw amino-acid sequence, 96 residues long: Integration host factor subunit alpha (96 aa).

This sequence belongs to the bacterial histone-like protein family. In terms of assembly, heterodimer of an alpha and a beta chain.

Functionally, this protein is one of the two subunits of integration host factor, a specific DNA-binding protein that functions in genetic recombination as well as in transcriptional and translational control. The chain is Integration host factor subunit alpha from Haemophilus influenzae (strain 86-028NP).